We begin with the raw amino-acid sequence, 64 residues long: Cold shock protein CapA (64 aa).

Positions 7–64 (GTVKWFNDEKGFGFITPQGGGDDLFVHFKAIESDGFKSLKEGQTVSFVAEKGQKGMQA) constitute a CSD domain.

Its subcellular location is the cytoplasm. Affects cell viability at low temperatures. The protein is Cold shock protein CapA (capA) of Pseudomonas fragi.